The primary structure comprises 414 residues: Glucose-1-phosphate adenylyltransferase (414 aa).

Alpha-D-glucose 1-phosphate contacts are provided by residues Gly-164, 184-185, and Ser-204; that span reads EK.

Belongs to the bacterial/plant glucose-1-phosphate adenylyltransferase family. In terms of assembly, homotetramer.

It catalyses the reaction alpha-D-glucose 1-phosphate + ATP + H(+) = ADP-alpha-D-glucose + diphosphate. The protein operates within glycan biosynthesis; glycogen biosynthesis. Functionally, involved in the biosynthesis of ADP-glucose, a building block required for the elongation reactions to produce glycogen. Catalyzes the reaction between ATP and alpha-D-glucose 1-phosphate (G1P) to produce pyrophosphate and ADP-Glc. The sequence is that of Glucose-1-phosphate adenylyltransferase from Acidothermus cellulolyticus (strain ATCC 43068 / DSM 8971 / 11B).